Reading from the N-terminus, the 141-residue chain is ATP synthase F(0) complex subunit C3, mitochondrial (141 aa).

A mitochondrion-targeting transit peptide spans 1 to 66 (MFACAKLACT…REFQTTAVNR (66 aa)). Residues 82-102 (VGVAGSGAGIGTVFGSLIIGY) traverse the membrane as a helical segment. Position 109 is an N6,N6,N6-trimethyllysine (lysine 109). The helical transmembrane segment at 117–137 (ILGFALSEAMGLFCLMVAFLI) threads the bilayer.

Belongs to the ATPase C chain family. In terms of assembly, F-type ATPases have 2 components, CF(1) - the catalytic core - and CF(0) - the membrane proton channel. CF(1) has five subunits: alpha(3), beta(3), gamma(1), delta(1), epsilon(1). CF(0) has three main subunits: a, b and c. Interacts with TMEM70 and TMEM242. In terms of processing, trimethylated by ATPSCKMT at Lys-109. Methylation is required for proper incorporation of the C subunit into the ATP synthase complex and mitochondrial respiration.

The protein resides in the mitochondrion membrane. Its function is as follows. Mitochondrial membrane ATP synthase (F(1)F(0) ATP synthase or Complex V) produces ATP from ADP in the presence of a proton gradient across the membrane which is generated by electron transport complexes of the respiratory chain. F-type ATPases consist of two structural domains, F(1) - containing the extramembraneous catalytic core and F(0) - containing the membrane proton channel, linked together by a central stalk and a peripheral stalk. During catalysis, ATP synthesis in the catalytic domain of F(1) is coupled via a rotary mechanism of the central stalk subunits to proton translocation. Part of the complex F(0) domain. A homomeric c-ring of probably 10 subunits is part of the complex rotary element. This chain is ATP synthase F(0) complex subunit C3, mitochondrial, found in Bos taurus (Bovine).